A 209-amino-acid chain; its full sequence is MKELTKRQNEVLDVIKDQILKTGMPPTRVELAKILGFRSANAAEEHLKALARKGAIEILAGTSRGIRLLGEHQHNEKAHQDGLPLIGQVAAGEPILAQQHIETYYDVDPALFHPSADFLLRVQGESMKDIGIMDGDLLAVHKTQDIKNGQVVIARVEDDVTVKRFYREGRQVILKAENNDFGPIKIDLAYQSFDIEGIAVGVIRTADWM.

Residues 28–48 constitute a DNA-binding region (H-T-H motif); the sequence is RVELAKILGFRSANAAEEHLK. Catalysis depends on for autocatalytic cleavage activity residues Ser-126 and Lys-163.

It belongs to the peptidase S24 family. Homodimer.

The catalysed reaction is Hydrolysis of Ala-|-Gly bond in repressor LexA.. Represses a number of genes involved in the response to DNA damage (SOS response), including recA and lexA. In the presence of single-stranded DNA, RecA interacts with LexA causing an autocatalytic cleavage which disrupts the DNA-binding part of LexA, leading to derepression of the SOS regulon and eventually DNA repair. The chain is LexA repressor from Psychromonas ingrahamii (strain DSM 17664 / CCUG 51855 / 37).